The primary structure comprises 90 residues: Cyclin-dependent kinases regulatory subunit 1 (90 aa).

It belongs to the CKS family.

In terms of biological role, binds to the catalytic subunit of the cyclin dependent kinases and is essential for their biological function. In Oryza sativa subsp. indica (Rice), this protein is Cyclin-dependent kinases regulatory subunit 1 (CKS1).